Consider the following 187-residue polypeptide: ATP synthase subunit delta (187 aa).

Belongs to the ATPase delta chain family. F-type ATPases have 2 components, F(1) - the catalytic core - and F(0) - the membrane proton channel. F(1) has five subunits: alpha(3), beta(3), gamma(1), delta(1), epsilon(1). F(0) has three main subunits: a(1), b(2) and c(10-14). The alpha and beta chains form an alternating ring which encloses part of the gamma chain. F(1) is attached to F(0) by a central stalk formed by the gamma and epsilon chains, while a peripheral stalk is formed by the delta and b chains.

It is found in the cell membrane. F(1)F(0) ATP synthase produces ATP from ADP in the presence of a proton or sodium gradient. F-type ATPases consist of two structural domains, F(1) containing the extramembraneous catalytic core and F(0) containing the membrane proton channel, linked together by a central stalk and a peripheral stalk. During catalysis, ATP synthesis in the catalytic domain of F(1) is coupled via a rotary mechanism of the central stalk subunits to proton translocation. In terms of biological role, this protein is part of the stalk that links CF(0) to CF(1). It either transmits conformational changes from CF(0) to CF(1) or is implicated in proton conduction. In Mesomycoplasma hyopneumoniae (strain J / ATCC 25934 / NCTC 10110) (Mycoplasma hyopneumoniae), this protein is ATP synthase subunit delta.